The chain runs to 220 residues: Large ribosomal subunit protein uL3 (220 aa).

The disordered stretch occupies residues 127 to 155 (FQGAIKRHGQSRGPMSHSSHFHRAPDSVG).

This sequence belongs to the universal ribosomal protein uL3 family. Part of the 50S ribosomal subunit. Forms a cluster with proteins L14 and L19.

Functionally, one of the primary rRNA binding proteins, it binds directly near the 3'-end of the 23S rRNA, where it nucleates assembly of the 50S subunit. The chain is Large ribosomal subunit protein uL3 from Staphylococcus aureus (strain JH9).